Consider the following 380-residue polypeptide: MASSNGLSLQEIADLVGGQLLDFSDCINDETNSSDGAVQGKSPSVEISSTICTGAAPPAEAGPQQITLIDQANHAGQLADSQAFAVIAPEYVAASPIRLQILVDDPHAAFTKLVSHYRPALGETMPVSGIDPTAKVDPTCQVHPSANIGANVEIGPGCTIAPGVNIGAGCQIGADCTLHPNVTLYAYCQLGERVTLHAGTVVGAHGFGYKMVDGRHIPTAQLGYVVIENDVEVGASSTIDRGTYGATRIGEGTKIDNQVMIAHNCQIGRHNLLCSQVGIAGSCTTGDYVVLAGQVGLKDHIALADGVIVGAQAGVMDDLAPNQVYLGSPATPQRDQMQIMAVQRKLPEMRRELKRLTQRIGRLSEALEEQSADIDQRKAA.

Catalysis depends on His263, which acts as the Proton acceptor.

The protein belongs to the transferase hexapeptide repeat family. LpxD subfamily. In terms of assembly, homotrimer.

It carries out the reaction a UDP-3-O-[(3R)-3-hydroxyacyl]-alpha-D-glucosamine + a (3R)-hydroxyacyl-[ACP] = a UDP-2-N,3-O-bis[(3R)-3-hydroxyacyl]-alpha-D-glucosamine + holo-[ACP] + H(+). It functions in the pathway bacterial outer membrane biogenesis; LPS lipid A biosynthesis. Its function is as follows. Catalyzes the N-acylation of UDP-3-O-acylglucosamine using 3-hydroxyacyl-ACP as the acyl donor. Is involved in the biosynthesis of lipid A, a phosphorylated glycolipid that anchors the lipopolysaccharide to the outer membrane of the cell. The chain is UDP-3-O-acylglucosamine N-acyltransferase from Rhodopirellula baltica (strain DSM 10527 / NCIMB 13988 / SH1).